A 434-amino-acid polypeptide reads, in one-letter code: Nicotinate phosphoribosyltransferase (434 aa).

H242 carries the post-translational modification Phosphohistidine; by autocatalysis.

The protein belongs to the NAPRTase family. In terms of processing, transiently phosphorylated on a His residue during the reaction cycle. Phosphorylation strongly increases the affinity for substrates and increases the rate of nicotinate D-ribonucleotide production. Dephosphorylation regenerates the low-affinity form of the enzyme, leading to product release.

It catalyses the reaction nicotinate + 5-phospho-alpha-D-ribose 1-diphosphate + ATP + H2O = nicotinate beta-D-ribonucleotide + ADP + phosphate + diphosphate. It participates in cofactor biosynthesis; NAD(+) biosynthesis; nicotinate D-ribonucleotide from nicotinate: step 1/1. In terms of biological role, catalyzes the synthesis of beta-nicotinate D-ribonucleotide from nicotinate and 5-phospho-D-ribose 1-phosphate at the expense of ATP. This Bartonella tribocorum (strain CIP 105476 / IBS 506) protein is Nicotinate phosphoribosyltransferase.